Here is a 67-residue protein sequence, read N- to C-terminus: Small ribosomal subunit protein eS31 (67 aa).

The Zn(2+) site is built by Cys-31, Cys-34, Cys-49, and Cys-52. Residues 31–52 form a C4-type zinc finger; that stretch reads CPKCGAGVFMAEHLNRFACGKC.

Belongs to the eukaryotic ribosomal protein eS31 family. Part of the 30S ribosomal subunit. It depends on Zn(2+) as a cofactor.

This is Small ribosomal subunit protein eS31 from Methanococcus maripaludis (strain C7 / ATCC BAA-1331).